Reading from the N-terminus, the 157-residue chain is Probable chemoreceptor glutamine deamidase CheD (157 aa).

This sequence belongs to the CheD family.

It catalyses the reaction L-glutaminyl-[protein] + H2O = L-glutamyl-[protein] + NH4(+). Its function is as follows. Probably deamidates glutamine residues to glutamate on methyl-accepting chemotaxis receptors (MCPs), playing an important role in chemotaxis. This Archaeoglobus fulgidus (strain ATCC 49558 / DSM 4304 / JCM 9628 / NBRC 100126 / VC-16) protein is Probable chemoreceptor glutamine deamidase CheD.